We begin with the raw amino-acid sequence, 576 residues long: SNF1-like protein kinase ssp2 (576 aa).

One can recognise a Protein kinase domain in the interval 34–285 (YIIRETLGEG…IQEIRRDPWF (252 aa)). ATP contacts are provided by residues 40–48 (LGEGSFGKV) and lysine 63. Catalysis depends on aspartate 156, which acts as the Proton acceptor. At threonine 189 the chain carries Phosphothreonine. The interval 292–348 (YLRPMEEVQGSYADSRIVSKLGEAMGFSEDYIVEALRSDENNEVKEAYNLLHENQVI) is auto-inhibitory domain (AID). The UBA domain maps to 304–345 (ADSRIVSKLGEAMGFSEDYIVEALRSDENNEVKEAYNLLHEN). The residue at position 442 (serine 442) is a Phosphoserine.

The protein belongs to the protein kinase superfamily. CAMK Ser/Thr protein kinase family. SNF1 subfamily. As to quaternary structure, component of the AMP-activated protein kinase complex also known as the SNF1 kinase complex (Snf1c), a heterotrimeric complex composed of a catalytic subunit alpha and 2 regulatory subunits beta (amk2) and gamma (cbs2). Post-translationally, phosphorylation at Thr-189 by ssp1 is required for nuclear entry in nutritionally stressed cells.

It localises to the cytoplasm. It is found in the nucleus. The enzyme catalyses L-seryl-[protein] + ATP = O-phospho-L-seryl-[protein] + ADP + H(+). It carries out the reaction L-threonyl-[protein] + ATP = O-phospho-L-threonyl-[protein] + ADP + H(+). Functionally, serine/threonine protein kinase essential for release from glucose repression via the phosphorylation of scr1 upon glucose deprivation. Catalytic subunit of the AMP-activated protein kinase complex also known as the SNF1 kinase complex (Snf1c), a central regulator of cellular energy homeostasis, which, in response to a fall in intracellular ATP levels, activates energy-producing pathways and inhibits energy-consuming processes. The complex phosphorylates histone H3 to form H3S10ph, which promotes H3K14ac formation, leading to transcriptional activation through TBP recruitment to the promoters. Regulates proper cell cycle exit and sexual differentiation. Also regulates ste11 levels under nitrogen deprivation. The sequence is that of SNF1-like protein kinase ssp2 from Schizosaccharomyces pombe (strain 972 / ATCC 24843) (Fission yeast).